A 131-amino-acid chain; its full sequence is UPF0102 protein Ent638_3585 (131 aa).

The interval 1-20 is disordered; it reads MAQIPAGADRPGKLSRKQTG.

This sequence belongs to the UPF0102 family.

In Enterobacter sp. (strain 638), this protein is UPF0102 protein Ent638_3585.